The primary structure comprises 288 residues: 4-diphosphocytidyl-2-C-methyl-D-erythritol kinase (288 aa).

The active site involves Lys19. Position 102-112 (102-112) interacts with ATP; it reads PMGGGIGGGSS. Asp144 is an active-site residue.

The protein belongs to the GHMP kinase family. IspE subfamily.

It carries out the reaction 4-CDP-2-C-methyl-D-erythritol + ATP = 4-CDP-2-C-methyl-D-erythritol 2-phosphate + ADP + H(+). It participates in isoprenoid biosynthesis; isopentenyl diphosphate biosynthesis via DXP pathway; isopentenyl diphosphate from 1-deoxy-D-xylulose 5-phosphate: step 3/6. Functionally, catalyzes the phosphorylation of the position 2 hydroxy group of 4-diphosphocytidyl-2C-methyl-D-erythritol. In Pseudomonas savastanoi pv. phaseolicola (strain 1448A / Race 6) (Pseudomonas syringae pv. phaseolicola (strain 1448A / Race 6)), this protein is 4-diphosphocytidyl-2-C-methyl-D-erythritol kinase.